Consider the following 467-residue polypeptide: 3-isopropylmalate dehydratase large subunit (467 aa).

Residues Cys347, Cys407, and Cys410 each contribute to the [4Fe-4S] cluster site.

It belongs to the aconitase/IPM isomerase family. LeuC type 1 subfamily. Heterodimer of LeuC and LeuD. Requires [4Fe-4S] cluster as cofactor.

It carries out the reaction (2R,3S)-3-isopropylmalate = (2S)-2-isopropylmalate. The protein operates within amino-acid biosynthesis; L-leucine biosynthesis; L-leucine from 3-methyl-2-oxobutanoate: step 2/4. In terms of biological role, catalyzes the isomerization between 2-isopropylmalate and 3-isopropylmalate, via the formation of 2-isopropylmaleate. The protein is 3-isopropylmalate dehydratase large subunit of Prochlorococcus marinus (strain MIT 9301).